A 461-amino-acid chain; its full sequence is Homocitrate synthase (461 aa).

Positions 4 to 259 (VGILDSTLRE…IEVVKLDKLQ (256 aa)) constitute a Pyruvate carboxyltransferase domain. Arg-12 provides a ligand contact to 2-oxoglutarate. Residue Glu-13 coordinates Mg(2+). 2-oxoglutarate is bound by residues His-76, Arg-136, and Thr-170. Mg(2+) contacts are provided by His-198 and His-200. His-292 acts as the Proton acceptor in catalysis.

Belongs to the alpha-IPM synthase/homocitrate synthase family. Homocitrate synthase LYS20/LYS21 subfamily. The cofactor is Mg(2+). Requires Mn(2+) as cofactor.

It catalyses the reaction acetyl-CoA + 2-oxoglutarate + H2O = (2R)-homocitrate + CoA + H(+). The protein operates within amino-acid biosynthesis; L-lysine biosynthesis via AAA pathway; L-alpha-aminoadipate from 2-oxoglutarate: step 1/5. Its function is as follows. Catalyzes the aldol-type condensation of 2-oxoglutarate with acetyl-CoA to yield homocitrate. Carries out the first step of the alpha-aminoadipate (AAA) lysine biosynthesis pathway. The chain is Homocitrate synthase from Saccharolobus islandicus (strain Y.N.15.51 / Yellowstone #2) (Sulfolobus islandicus).